Consider the following 179-residue polypeptide: UPF0227 protein VC0395_A1482/VC395_2007 (179 aa).

This sequence belongs to the UPF0227 family.

This Vibrio cholerae serotype O1 (strain ATCC 39541 / Classical Ogawa 395 / O395) protein is UPF0227 protein VC0395_A1482/VC395_2007.